Consider the following 541-residue polypeptide: Arginine--tRNA ligase (541 aa).

The 'HIGH' region motif lies at 119–129 (ANPTGPLHIGH).

This sequence belongs to the class-I aminoacyl-tRNA synthetase family. As to quaternary structure, monomer.

Its subcellular location is the cytoplasm. The enzyme catalyses tRNA(Arg) + L-arginine + ATP = L-arginyl-tRNA(Arg) + AMP + diphosphate. This chain is Arginine--tRNA ligase (argS), found in Helicobacter pylori (strain ATCC 700392 / 26695) (Campylobacter pylori).